A 224-amino-acid polypeptide reads, in one-letter code: uncharacterized protein (224 aa).

This is an uncharacterized protein from Acanthamoeba polyphaga mimivirus (APMV).